Reading from the N-terminus, the 443-residue chain is Adenylyltransferase and sulfurtransferase UBA4 (443 aa).

ATP contacts are provided by residues Gly-83, Asp-104, 111–115, Lys-128, and 172–173; these read SNLHR and DT. The Zn(2+) site is built by Cys-214 and Cys-217. Residue Cys-231 is the Glycyl thioester intermediate; for adenylyltransferase activity of the active site. Zn(2+)-binding residues include Cys-292 and Cys-295. Residues 343–441 form the Rhodanese domain; the sequence is QSKAPVLLDV…WSDIVNPKFP (99 aa). The active-site Cysteine persulfide intermediate; for sulfurtransferase activity is Cys-400.

In the N-terminal section; belongs to the HesA/MoeB/ThiF family. UBA4 subfamily. The cofactor is Zn(2+).

It localises to the cytoplasm. It is found in the cytosol. It functions in the pathway tRNA modification; 5-methoxycarbonylmethyl-2-thiouridine-tRNA biosynthesis. In terms of biological role, plays a central role in 2-thiolation of mcm(5)S(2)U at tRNA wobble positions of cytosolic tRNA(Lys), tRNA(Glu) and tRNA(Gln). Acts by mediating the C-terminal thiocarboxylation of sulfur carrier URM1. Its N-terminus first activates URM1 as acyl-adenylate (-COAMP), then the persulfide sulfur on the catalytic cysteine is transferred to URM1 to form thiocarboxylation (-COSH) of its C-terminus. The reaction probably involves hydrogen sulfide that is generated from the persulfide intermediate and that acts as a nucleophile towards URM1. Subsequently, a transient disulfide bond is formed. Does not use thiosulfate as sulfur donor; NFS1 probably acting as a sulfur donor for thiocarboxylation reactions. Prior mcm(5) tRNA modification by the elongator complex is required for 2-thiolation. May also be involved in protein urmylation. The chain is Adenylyltransferase and sulfurtransferase UBA4 from Scheffersomyces stipitis (strain ATCC 58785 / CBS 6054 / NBRC 10063 / NRRL Y-11545) (Yeast).